Reading from the N-terminus, the 681-residue chain is U3 small nucleolar ribonucleoprotein protein MPP10 (681 aa).

Ser-61, Ser-120, and Ser-140 each carry phosphoserine. Positions 109–139 (ECEDEECEEDASEVEADNQENLETDLDEEQL) form a coiled coil. A compositionally biased stretch (acidic residues) spans 111–144 (EDEECEEDASEVEADNQENLETDLDEEQLSDEGG). 3 disordered regions span residues 111–202 (EDEE…SVVD), 215–256 (LEKV…GRQK), and 268–365 (YKDF…EKRQ). A compositionally biased stretch (basic and acidic residues) spans 145 to 163 (DVPKGRDRAKSSRKSDPRK). A phosphoserine mark is found at Ser-164, Ser-168, and Ser-172. Residues 215–227 (LEKVEKEEEKRPD) show a composition bias toward basic and acidic residues. 2 stretches are compositionally biased toward acidic residues: residues 228–248 (GEEE…DESE) and 273–322 (DPVE…EDEN). Ser-244, Ser-247, Ser-277, and Ser-346 each carry phosphoserine. Residues 349 to 383 (AVKQESDEVKSSFEKRQEKMNEKIASLEKELLDKK) adopt a coiled-coil conformation. Residue Lys-351 forms a Glycyl lysine isopeptide (Lys-Gly) (interchain with G-Cter in SUMO2) linkage. Over residues 352–365 (QESDEVKSSFEKRQ) the composition is skewed to basic and acidic residues. Glycyl lysine isopeptide (Lys-Gly) (interchain with G-Cter in SUMO2) cross-links involve residues Lys-383 and Lys-395. Positions 471–491 (AEIYEQEYLKLNQQKTEEEDN) form a coiled coil. Lys-556 is covalently cross-linked (Glycyl lysine isopeptide (Lys-Gly) (interchain with G-Cter in SUMO2)). The span at 560-576 (KAGDLKTAAEKTATDKK) shows a compositional bias: basic and acidic residues. The interval 560–644 (KAGDLKTAAE…RKDKPLKSSQ (85 aa)) is disordered. Positions 575-604 (KKRERRKKKYQKRLKIKEKEKRKKLLEKNN) form a coiled coil. The segment covering 577–599 (RERRKKKYQKRLKIKEKEKRKKL) has biased composition (basic residues). Residue Lys-609 is modified to N6-acetyllysine. Positions 630-640 (LLKDERKDKPL) are enriched in basic and acidic residues. Glycyl lysine isopeptide (Lys-Gly) (interchain with G-Cter in SUMO2) cross-links involve residues Lys-632 and Lys-649. The disordered stretch occupies residues 657 to 681 (QINDAKQPEKIKKKKQDISVHKLKL). A compositionally biased stretch (basic and acidic residues) spans 662–681 (KQPEKIKKKKQDISVHKLKL).

This sequence belongs to the MPP10 family. As to quaternary structure, part of the small subunit (SSU) processome, composed of more than 70 proteins and the RNA chaperone small nucleolar RNA (snoRNA) U3. Component of a heterotrimeric complex containing IMP3, IMP4 and MPHOSPH10. Interacts with IMP3 and IMP4. Post-translationally, phosphorylated in M (mitotic) phase.

The protein localises to the nucleus. It localises to the nucleolus. The protein resides in the chromosome. Functionally, component of the 60-80S U3 small nucleolar ribonucleoprotein (U3 snoRNP). Required for the early cleavages during pre-18S ribosomal RNA processing. Part of the small subunit (SSU) processome, first precursor of the small eukaryotic ribosomal subunit. During the assembly of the SSU processome in the nucleolus, many ribosome biogenesis factors, an RNA chaperone and ribosomal proteins associate with the nascent pre-rRNA and work in concert to generate RNA folding, modifications, rearrangements and cleavage as well as targeted degradation of pre-ribosomal RNA by the RNA exosome. The sequence is that of U3 small nucleolar ribonucleoprotein protein MPP10 (Mphosph10) from Mus musculus (Mouse).